Here is a 286-residue protein sequence, read N- to C-terminus: uncharacterized protein (286 aa).

The protein belongs to the chlamydial CPn_0389/CT_041/TC_0311 family.

This is an uncharacterized protein from Chlamydia muridarum (strain MoPn / Nigg).